A 473-amino-acid chain; its full sequence is Photosystem II CP43 reaction center protein (473 aa).

A propeptide spanning residues 1 to 14 (MKILYSLRRYFHVE) is cleaved from the precursor. Residue Thr-15 is modified to N-acetylthreonine. A Phosphothreonine modification is found at Thr-15. 5 consecutive transmembrane segments (helical) span residues 69-93 (LFEVAHFVPEKPMYEQGLILLPHLA), 134-155 (LIGPETLEESFPFFGYVWKDKN), 178-200 (KAIWFGGLYDTWAPGGGDVRKIT), 255-275 (KPFAWARRAFVWSGEAYLSYS), and 291-312 (WFNNTAYPSEFYGPTGPEASQA). Glu-367 provides a ligand contact to [CaMn4O5] cluster. Residues 447 to 471 (RARAAAAGFEKGIDRDSEPVLYMEP) traverse the membrane as a helical segment.

The protein belongs to the PsbB/PsbC family. PsbC subfamily. In terms of assembly, PSII is composed of 1 copy each of membrane proteins PsbA, PsbB, PsbC, PsbD, PsbE, PsbF, PsbH, PsbI, PsbJ, PsbK, PsbL, PsbM, PsbT, PsbX, PsbY, PsbZ, Psb30/Ycf12, at least 3 peripheral proteins of the oxygen-evolving complex and a large number of cofactors. It forms dimeric complexes. It depends on Binds multiple chlorophylls and provides some of the ligands for the Ca-4Mn-5O cluster of the oxygen-evolving complex. It may also provide a ligand for a Cl- that is required for oxygen evolution. PSII binds additional chlorophylls, carotenoids and specific lipids. as a cofactor.

The protein localises to the plastid. It is found in the chloroplast thylakoid membrane. Functionally, one of the components of the core complex of photosystem II (PSII). It binds chlorophyll and helps catalyze the primary light-induced photochemical processes of PSII. PSII is a light-driven water:plastoquinone oxidoreductase, using light energy to abstract electrons from H(2)O, generating O(2) and a proton gradient subsequently used for ATP formation. The protein is Photosystem II CP43 reaction center protein of Chara vulgaris (Common stonewort).